Reading from the N-terminus, the 111-residue chain is Short neuropeptide F (111 aa).

Positions 1–24 are cleaved as a signal peptide; sequence MSAMYAKRCAALVLLVVTVGLVNA. Residues 25 to 76 constitute a propeptide that is removed on maturation; that stretch reads TENYMDYGEEMAEKTPAENIHELYRLLLQRNTLDNAGFGGIPLEHLMIRKSQ. A Phenylalanine amide modification is found at Phe85. The propeptide occupies 88-111; the sequence is SGPHVSARALPRPMGAVAGYDDNN.

As to expression, expressed throughout the central nervous system (at protein level).

The protein localises to the secreted. Its function is as follows. Plays a role in controlling food intake and regulating body size. This Camponotus floridanus (Florida carpenter ant) protein is Short neuropeptide F.